A 978-amino-acid chain; its full sequence is Calsyntenin-1 (978 aa).

Residues 1–26 (MTFHKTFGYGCIVLICFELLFAGVET) form the signal peptide. The Extracellular portion of the chain corresponds to 27 to 876 (SSENDDEYLT…SFIHKAEGSH (850 aa)). 2 Cadherin domains span residues 37-143 (QKEI…APTF) and 144-249 (LEPS…MPER). N-linked (GlcNAc...) asparagine glycosylation occurs at N53. N304, N486, N608, and N823 each carry an N-linked (GlcNAc...) asparagine glycan. The helical transmembrane segment at 877-897 (VTMLIILVSVFLAVLLCGVSI) threads the bilayer. The Cytoplasmic portion of the chain corresponds to 898 to 978 (ARLKNNQKYI…EWDNSNIFQQ (81 aa)). Residues 937–958 (ADVTSDASSESENSESEDEEAL) form a disordered region. Residues 948 to 957 (ENSESEDEEA) are compositionally biased toward acidic residues.

This sequence belongs to the calsyntenin family.

The protein localises to the postsynaptic cell membrane. Its function is as follows. Postsynaptic adhesion molecule that binds to presynaptic neurexins to mediate both excitatory and inhibitory synapse formation. Promotes synapse development by acting as a cell adhesion molecule at the postsynaptic membrane, which associates with neurexin-alpha at the presynaptic membrane. In Drosophila melanogaster (Fruit fly), this protein is Calsyntenin-1 (Cals).